The primary structure comprises 134 residues: Small ribosomal subunit protein bS6 (134 aa).

A compositionally biased stretch (basic and acidic residues) spans Asn-113–Pro-122. A disordered region spans residues Asn-113–Asn-134.

This sequence belongs to the bacterial ribosomal protein bS6 family.

Binds together with bS18 to 16S ribosomal RNA. The sequence is that of Small ribosomal subunit protein bS6 from Borrelia recurrentis (strain A1).